Consider the following 1518-residue polypeptide: MYGTWFTTGKVTDLLARTGLDRVPVWVPVVLGVVLMAFVGSVRIDPALQGWVSVGTVTLLLVLNRRRGRGITVFLMMLSLLVSLRYIVWRLTATVQFSNWLQTALAVLLLLAEAYALMTLCLSYFQMAWPLRRREHPLPEDMAQWPSVDVFVPSYNEELSLVRSTVLGALDLDWPADRLNVYILDDGRRKAFHDFAVEAGAGYIIRAENNHAKAGNLNHALAVTDSPFAVIFDCDHVPTRGFLRRTIGWMMADPNLALLQTPHHFYAPDPFQRNLAGGMHVPPEGNMFYGLVQDGNDFWDATFFCGSCAIIRREAVMGIGGFATETVTEDAHTALKMQRRGWGTAYLREPLAAGLATERLILHIGQRVRWARGMIQIMRLDNPMLGAGLRWEQRLCYLSAMSHFLFAIPRLTFLVSPLAFLFLGQNIIAASPLAISVYALPHIFHSVITLSRIEGRWRYSFWSEIYETSLALFLVRITIVTLLQPHKGKFNVTDKGGLLARGYFDWDAVYPNVILAGVLCAALLRGVFGIVWQFHDRLALQSFILNTLWVVISLIIVLASIAVGRETRQTRNAPRVSVRLPVVVTDAHGRQMEGHTHDISLGGLAVGTRLATPDMVGGEVTVRYDSARDGIHVGVPARVLDARDGTLRLRWAVRDLEDERQVVSMVFGRNDAWAGWADFAPDRPLRSLAMVFRSIGGLLRRRPAEAPRALHEMGEGELPATEEKLEKQSFVLKPVPRSARHGATASAALFVAFTALVPAAMAQEAPSPDQSGVTAETPFGDSNTGVVPDALPAIDPAVADRISDAEVTRTLTFRNLGATTGPLTLRGYSPLQGLDVVVPANRVVTHAQLTLSGALSPSLLPEASAVTVTLNEQYVGTLKVDPQHPQFGPVSFDIDPLYFTGDNKLNFHFAGEYRRDCNDLFNEILWARISDMSRITLTTVRITPERKLSRLPAPFFDPNQRSTLRVPVVLPATGDRGALRAAGLVASWFGRIADFRKLSFPVSTTIPASGNAVEVGVNLPVDAEGGRPAGPMLAEVANPNDRWGTVLVVTGRTAQEVEVAARALVFSPDTLGGVASKVVSDVSLETRHPYDAPAFVPTDRPVRFGELVGAADLQGGGFAPAGMTLPFHLPPDLYTWRGRPFLMNMWVRAPGGPVVDLETSRVDVSLNNNYLQSYTLSPPGLWRKWSERLVNQHAGAVGHVTALPPWLLFGQNQLQFNFDARPIDRGACRRTPGDIHMSVDSDSTLDFRRGYHFAEMPNLSYFAEAAFPFSRMADLSETTVVLPDHPDTGTTGAFLDLMGFFGASTWYPAAGVTVMGADEVAHTPPKGDIVVLGTAAQLGGAASGLLARSPYVIHDRHITVGQRMGLQGIWYLFQDHDHAGLKDGVTANLNAPIAEAGVLLAAQSPYDSQRSVVAFTGDTPERIHDLVLSLRNKGDLPSLQGDLVLKNGDRFTSYRTAPVYTVGSLPLWLRLDWFLGHHPSALYLAGLAGAGLAALGVWAWLRGWSRKRIARDDLTGEL.

Residues 1-731 (MYGTWFTTGK…EEKLEKQSFV (731 aa)) are catalytic. Helical transmembrane passes span 24–44 (PVWV…SVRI), 71–91 (ITVF…VWRL), and 105–125 (LAVL…LSYF). The segment at 144–237 (QWPSVDVFVP…FAVIFDCDHV (94 aa)) is catalytic subdomain A. Residue Asp-186 is part of the active site. Substrate is bound by residues Asp-233 and Asp-235. The interval 314-374 (EAVMGIGGFA…GQRVRWARGM (61 aa)) is catalytic subdomain B. The active site involves Asp-330. Helical transmembrane passes span 404-424 (FLFA…LFLG), 427-447 (IIAA…FHSV), 465-485 (IYET…LLQP), 514-534 (ILAG…VWQF), and 543-563 (FILN…SIAV). The region spanning 569–668 (QTRNAPRVSV…ERQVVSMVFG (100 aa)) is the PilZ domain. The cyclic di-GMP binding domain stretch occupies residues 732-1518 (LKPVPRSARH…IARDDLTGEL (787 aa)). The disordered stretch occupies residues 765 to 785 (APSPDQSGVTAETPFGDSNTG). A compositionally biased stretch (polar residues) spans 768–785 (PDQSGVTAETPFGDSNTG). Residues 1481 to 1501 (ALYLAGLAGAGLAALGVWAWL) traverse the membrane as a helical segment.

The protein in the N-terminal section; belongs to the glycosyltransferase 2 family. This sequence in the C-terminal section; belongs to the AcsB/BcsB family.

The protein resides in the cell inner membrane. The enzyme catalyses [(1-&gt;4)-beta-D-glucosyl](n) + UDP-alpha-D-glucose = [(1-&gt;4)-beta-D-glucosyl](n+1) + UDP + H(+). The protein operates within glycan metabolism; bacterial cellulose biosynthesis. The protein is Putative cellulose synthase 2 (bcsABII-A) of Komagataeibacter xylinus (Gluconacetobacter xylinus).